The sequence spans 97 residues: NADH-ubiquinone oxidoreductase chain 4L (97 aa).

Transmembrane regions (helical) follow at residues 1 to 21 (MALL…ILLN), 25 to 45 (FLSI…GIAI), and 60 to 80 (LFVL…MVGL).

The protein belongs to the complex I subunit 4L family.

Its subcellular location is the mitochondrion membrane. It catalyses the reaction a ubiquinone + NADH + 5 H(+)(in) = a ubiquinol + NAD(+) + 4 H(+)(out). Its function is as follows. Core subunit of the mitochondrial membrane respiratory chain NADH dehydrogenase (Complex I) that is believed to belong to the minimal assembly required for catalysis. Complex I functions in the transfer of electrons from NADH to the respiratory chain. The immediate electron acceptor for the enzyme is believed to be ubiquinone. The polypeptide is NADH-ubiquinone oxidoreductase chain 4L (ND4L) (Strongylocentrotus purpuratus (Purple sea urchin)).